The chain runs to 803 residues: Putative metal ion transporter C27B12.12c (803 aa).

Polar residues predominate over residues M1 to K20. Residues M1–N255 are disordered. Residues T21–S45 show a composition bias toward low complexity. Positions M58–T82 are enriched in polar residues. 2 stretches are compositionally biased toward basic residues: residues K105 to I123 and Q152 to P166. Composition is skewed to low complexity over residues A181 to S194 and S218 to D253. S318 is subject to Phosphoserine. Disordered regions lie at residues P326–E349 and F406–E431. The span at D337 to V347 shows a compositional bias: acidic residues. The span at F406–N419 shows a compositional bias: basic and acidic residues. Positions D420–A430 are enriched in polar residues. Residues S449 and S452 each carry the phosphoserine modification. Helical transmembrane passes span I745 to N765 and L776 to I796.

The protein belongs to the CorA metal ion transporter (MIT) (TC 1.A.35) family.

The protein localises to the cytoplasm. It localises to the membrane. This Schizosaccharomyces pombe (strain 972 / ATCC 24843) (Fission yeast) protein is Putative metal ion transporter C27B12.12c.